A 129-amino-acid chain; its full sequence is Protein RfbJ (129 aa).

This sequence belongs to the glycosyltransferase 2 family.

The protein operates within bacterial outer membrane biogenesis; lipopolysaccharide biosynthesis. The sequence is that of Protein RfbJ (rfbJ) from Shigella flexneri.